We begin with the raw amino-acid sequence, 287 residues long: uncharacterized protein (287 aa).

Residues 43 to 50 (GKTGAGKS), 90 to 93 (DLPG), and 156 to 159 (DKAE) contribute to the GTP site. A G domain is found at 48 to 140 (GKSSLCNALF…TDEHFYRQVI (93 aa)).

It to E.coli YkfA and YeeP.

This is an uncharacterized protein from Escherichia coli (strain K12).